The following is a 283-amino-acid chain: Undecaprenyl-diphosphatase (283 aa).

7 helical membrane-spanning segments follow: residues 40–60 (GAAFTAIVQIGTLAAVLIYFF), 85–105 (AKMGWMIAAGTIPIVIFGLLF), 113–133 (LRSLYWISGALIGLALLLTIA), 153–173 (IGWKDALLIGLIQSIALIPGS), 193–213 (AARFSFLLSLPSVLAAGVFQL), 227–247 (LIAIIVATIVSGIVGYASIAF), and 259–279 (VFIIYRLLLGSGILLMLATGM).

This sequence belongs to the UppP family.

The protein resides in the cell inner membrane. The catalysed reaction is di-trans,octa-cis-undecaprenyl diphosphate + H2O = di-trans,octa-cis-undecaprenyl phosphate + phosphate + H(+). Catalyzes the dephosphorylation of undecaprenyl diphosphate (UPP). Confers resistance to bacitracin. This Chlorobium limicola (strain DSM 245 / NBRC 103803 / 6330) protein is Undecaprenyl-diphosphatase.